Reading from the N-terminus, the 301-residue chain is Acetylglutamate kinase (301 aa).

Residues 68 to 69, R90, and N195 contribute to the substrate site; that span reads GG.

Belongs to the acetylglutamate kinase family. ArgB subfamily.

It is found in the cytoplasm. The catalysed reaction is N-acetyl-L-glutamate + ATP = N-acetyl-L-glutamyl 5-phosphate + ADP. It functions in the pathway amino-acid biosynthesis; L-arginine biosynthesis; N(2)-acetyl-L-ornithine from L-glutamate: step 2/4. Its function is as follows. Catalyzes the ATP-dependent phosphorylation of N-acetyl-L-glutamate. The chain is Acetylglutamate kinase from Pseudomonas fluorescens (strain ATCC BAA-477 / NRRL B-23932 / Pf-5).